The chain runs to 143 residues: Large ribosomal subunit protein uL11 (143 aa).

The protein belongs to the universal ribosomal protein uL11 family. As to quaternary structure, part of the ribosomal stalk of the 50S ribosomal subunit. Interacts with L10 and the large rRNA to form the base of the stalk. L10 forms an elongated spine to which L12 dimers bind in a sequential fashion forming a multimeric L10(L12)X complex. Post-translationally, one or more lysine residues are methylated.

In terms of biological role, forms part of the ribosomal stalk which helps the ribosome interact with GTP-bound translation factors. The chain is Large ribosomal subunit protein uL11 from Zymomonas mobilis subsp. mobilis (strain ATCC 31821 / ZM4 / CP4).